Here is a 164-residue protein sequence, read N- to C-terminus: Interleukin-10 (164 aa).

Residues 1 to 18 (MPSSALLCCLIFLARVAA) form the signal peptide. 2 disulfide bridges follow: C30-C126 and C80-C132. N-linked (GlcNAc...) asparagine glycosylation is present at N134.

This sequence belongs to the IL-10 family. As to quaternary structure, homodimer. Interacts with IL10RA and IL10RB.

The protein localises to the secreted. Its function is as follows. Major immune regulatory cytokine that acts on many cells of the immune system where it has profound anti-inflammatory functions, limiting excessive tissue disruption caused by inflammation. Mechanistically, IL10 binds to its heterotetrameric receptor comprising IL10RA and IL10RB leading to JAK1 and STAT2-mediated phosphorylation of STAT3. In turn, STAT3 translocates to the nucleus where it drives expression of anti-inflammatory mediators. Targets antigen-presenting cells (APCs) such as macrophages and monocytes and inhibits their release of pro-inflammatory cytokines including granulocyte-macrophage colony-stimulating factor /GM-CSF, granulocyte colony-stimulating factor/G-CSF, IL-1 alpha, IL-1 beta, IL-6, IL-8 and TNF-alpha. Also interferes with antigen presentation by reducing the expression of MHC-class II and co-stimulatory molecules, thereby inhibiting their ability to induce T cell activation. In addition, controls the inflammatory response of macrophages by reprogramming essential metabolic pathways including mTOR signaling. This chain is Interleukin-10 (IL10), found in Orcinus orca (Killer whale).